The sequence spans 151 residues: S-protein homolog 74 (151 aa).

The N-terminal stretch at 1 to 25 is a signal peptide; that stretch reads MNYIKQFILAICFYLVLTCQDHVLA.

Belongs to the plant self-incompatibility (S1) protein family.

The protein resides in the secreted. The polypeptide is S-protein homolog 74 (Arabidopsis thaliana (Mouse-ear cress)).